A 367-amino-acid polypeptide reads, in one-letter code: tRNA/tmRNA (uracil-C(5))-methyltransferase (367 aa).

5 residues coordinate S-adenosyl-L-methionine: Gln190, Tyr218, Asn223, Glu239, and Asp299. The active-site Nucleophile is Cys324. Glu358 serves as the catalytic Proton acceptor.

Belongs to the class I-like SAM-binding methyltransferase superfamily. RNA M5U methyltransferase family. TrmA subfamily.

It catalyses the reaction uridine(54) in tRNA + S-adenosyl-L-methionine = 5-methyluridine(54) in tRNA + S-adenosyl-L-homocysteine + H(+). The enzyme catalyses uridine(341) in tmRNA + S-adenosyl-L-methionine = 5-methyluridine(341) in tmRNA + S-adenosyl-L-homocysteine + H(+). Dual-specificity methyltransferase that catalyzes the formation of 5-methyluridine at position 54 (m5U54) in all tRNAs, and that of position 341 (m5U341) in tmRNA (transfer-mRNA). This is tRNA/tmRNA (uracil-C(5))-methyltransferase from Yersinia pestis bv. Antiqua (strain Antiqua).